The sequence spans 141 residues: Small ribosomal subunit protein uS12 (141 aa).

Positions 1–11 are enriched in polar residues; the sequence is MPTISQLVTTS. Positions 1 to 22 are disordered; sequence MPTISQLVTTSRQDKNYKSKSP. Asp-102 carries the 3-methylthioaspartic acid modification.

It belongs to the universal ribosomal protein uS12 family. In terms of assembly, part of the 30S ribosomal subunit. Contacts proteins S8 and S17. May interact with IF1 in the 30S initiation complex.

In terms of biological role, with S4 and S5 plays an important role in translational accuracy. Interacts with and stabilizes bases of the 16S rRNA that are involved in tRNA selection in the A site and with the mRNA backbone. Located at the interface of the 30S and 50S subunits, it traverses the body of the 30S subunit contacting proteins on the other side and probably holding the rRNA structure together. The combined cluster of proteins S8, S12 and S17 appears to hold together the shoulder and platform of the 30S subunit. The chain is Small ribosomal subunit protein uS12 from Acholeplasma laidlawii (strain PG-8A).